A 260-amino-acid chain; its full sequence is Acyl-[acyl-carrier-protein]--UDP-N-acetylglucosamine O-acyltransferase (260 aa).

Belongs to the transferase hexapeptide repeat family. LpxA subfamily. Homotrimer.

It is found in the cytoplasm. The catalysed reaction is a (3R)-hydroxyacyl-[ACP] + UDP-N-acetyl-alpha-D-glucosamine = a UDP-3-O-[(3R)-3-hydroxyacyl]-N-acetyl-alpha-D-glucosamine + holo-[ACP]. It participates in glycolipid biosynthesis; lipid IV(A) biosynthesis; lipid IV(A) from (3R)-3-hydroxytetradecanoyl-[acyl-carrier-protein] and UDP-N-acetyl-alpha-D-glucosamine: step 1/6. Its function is as follows. Involved in the biosynthesis of lipid A, a phosphorylated glycolipid that anchors the lipopolysaccharide to the outer membrane of the cell. The chain is Acyl-[acyl-carrier-protein]--UDP-N-acetylglucosamine O-acyltransferase from Sulfurovum sp. (strain NBC37-1).